The sequence spans 317 residues: MSQLLVAKVLCMVGVFFFMLLGSLLPVKVIEADFEKAHRSKKVLSLCNTFGGGVFLATCFNALLPAVRDKLQQVLSLGHISTDYPLAETLMMVGFFLTVFVEQLVLTFRRERPPFIDLETFNAGSDAGSDSEYESPFVGVGGRNHGLYPEPTAHSHGTGLRLRELGRPGPLRLLSLVFALSAHSVFEGLALGLQEEGERVVSLFVGVAVHETLVAVALGISMARSAVPLRDAAKLAVTVSAMIPVGIGLGLGIESARSVASSVASALLQGLAGGTFLFVTFLEILAKELEERSEQLLKVLFLVLGYAVLAGMVFLKW.

The Extracellular portion of the chain corresponds to Met-1–Gln-3. The chain crosses the membrane as a helical span at residues Leu-4–Leu-24. Over Leu-25–Lys-42 the chain is Cytoplasmic. The chain crosses the membrane as a helical span at residues Val-43–Leu-63. At Leu-64 to Pro-85 the chain is on the extracellular side. A helical transmembrane segment spans residues Leu-86–Leu-106. At Thr-107 to Arg-172 the chain is on the cytoplasmic side. Residues Ser-125 and Ser-129 each carry the phosphoserine modification. A helical membrane pass occupies residues Leu-173–Leu-193. The Extracellular segment spans residues Gln-194–Arg-199. The helical transmembrane segment at Val-200–Ile-220 threads the bilayer. Over Ser-221 to Ala-232 the chain is Cytoplasmic. A helical transmembrane segment spans residues Ala-233 to Ile-253. Residues Glu-254 to Ser-265 lie on the Extracellular side of the membrane. A helical transmembrane segment spans residues Ala-266–Ala-286. Over Lys-287–Glu-294 the chain is Cytoplasmic. The chain crosses the membrane as a helical span at residues Gln-295–Leu-315. At Lys-316–Trp-317 the chain is on the extracellular side.

This sequence belongs to the ZIP transporter (TC 2.A.5) family.

The protein localises to the cell membrane. The protein resides in the apical cell membrane. It catalyses the reaction Zn(2+)(in) = Zn(2+)(out). In terms of biological role, transporter for the divalent cation Zn(2+). Mediates the influx of Zn(2+) into cells from extracellular space. Controls Zn(2+) accumulation into dentate gyrus granule cells in the hippocampus. Mediates Zn(2+) reuptake from the secreted milk within the alveolar lumen. The sequence is that of Zinc transporter ZIP3 (Slc39a3) from Rattus norvegicus (Rat).